A 163-amino-acid polypeptide reads, in one-letter code: Small heat shock protein C1 (163 aa).

Residues Thr55 to Asn163 form the sHSP domain.

The protein belongs to the small heat shock protein (HSP20) family.

The protein is Small heat shock protein C1 (hspC1) of Rickettsia prowazekii (strain Madrid E).